Consider the following 118-residue polypeptide: Large ribosomal subunit protein bL17 (118 aa).

The protein belongs to the bacterial ribosomal protein bL17 family. Part of the 50S ribosomal subunit. Contacts protein L32.

The polypeptide is Large ribosomal subunit protein bL17 (Campylobacter hominis (strain ATCC BAA-381 / DSM 21671 / CCUG 45161 / LMG 19568 / NCTC 13146 / CH001A)).